Reading from the N-terminus, the 148-residue chain is Endothelial differentiation-related factor 1 homolog (148 aa).

The interval 1–26 (MAESDWDTVTVLRKKGPSAAQAKSKQ) is disordered. One can recognise an HTH cro/C1-type domain in the interval 81-135 (IQQGRQSKGMTQKDLATKINEKPQVIADYESGRAIPNNQVMGKIERAIGLKLRGK). The segment at residues 92-111 (QKDLATKINEKPQVIADYES) is a DNA-binding region (H-T-H motif).

It is found in the nucleus. Probable transcriptional coactivator. This Gallus gallus (Chicken) protein is Endothelial differentiation-related factor 1 homolog (EDF1).